The chain runs to 105 residues: uncharacterized protein (105 aa).

Residues 81–105 (NNNNKTITVDNNNNNNNNNNNNNNK) form a disordered region.

This is an uncharacterized protein from Dictyostelium discoideum (Social amoeba).